Consider the following 231-residue polypeptide: 2-C-methyl-D-erythritol 4-phosphate cytidylyltransferase (231 aa).

The protein belongs to the IspD/TarI cytidylyltransferase family. IspD subfamily.

The enzyme catalyses 2-C-methyl-D-erythritol 4-phosphate + CTP + H(+) = 4-CDP-2-C-methyl-D-erythritol + diphosphate. The protein operates within isoprenoid biosynthesis; isopentenyl diphosphate biosynthesis via DXP pathway; isopentenyl diphosphate from 1-deoxy-D-xylulose 5-phosphate: step 2/6. Its function is as follows. Catalyzes the formation of 4-diphosphocytidyl-2-C-methyl-D-erythritol from CTP and 2-C-methyl-D-erythritol 4-phosphate (MEP). This chain is 2-C-methyl-D-erythritol 4-phosphate cytidylyltransferase, found in Xylella fastidiosa (strain 9a5c).